A 415-amino-acid chain; its full sequence is Serine/threonine transporter SstT (415 aa).

8 helical membrane passes run 21–41 (ILLG…AALA), 45–65 (LGTL…LVLV), 85–105 (FLYL…SVLF), 142–162 (ALLN…GIAF), 193–213 (LGIF…ALWG), 217–237 (LLMV…PLIV), 289–309 (VAIP…ITVL), and 331–351 (VVAS…LLLI).

Belongs to the dicarboxylate/amino acid:cation symporter (DAACS) (TC 2.A.23) family.

The protein localises to the cell inner membrane. The catalysed reaction is L-serine(in) + Na(+)(in) = L-serine(out) + Na(+)(out). The enzyme catalyses L-threonine(in) + Na(+)(in) = L-threonine(out) + Na(+)(out). In terms of biological role, involved in the import of serine and threonine into the cell, with the concomitant import of sodium (symport system). The sequence is that of Serine/threonine transporter SstT from Pectobacterium atrosepticum (strain SCRI 1043 / ATCC BAA-672) (Erwinia carotovora subsp. atroseptica).